A 584-amino-acid polypeptide reads, in one-letter code: Sodium/calcium exchanger NCL1 (584 aa).

5 helical membrane passes run 77-97, 120-140, 154-174, 215-235, and 245-265; these read FLPCTTTVLGNLFLVLAYGFL, LVGGLLLPILGALPDALLVLV, VLIGMGLLAGSTVFLLTLLWG, AARIMGISVIPFIIAQFPKML, and VLLALIVSFSLVLAYCLYQVF. 2 consecutive EF-hand domains span residues 305–340 and 345–380; these read PNEDVIKKLFHKIDMDESQTLSRAELHALIIGINFE and DKNDAVDKIMDDFDTSGNDIVEEAEFVSGMKRWLNE. Ca(2+)-binding residues include D318, D320, S322, T324, E329, D358, S360, N362, and E369. A run of 5 helical transmembrane segments spans residues 426–446, 466–486, 504–524, 531–551, and 561–581; these read WCITKAVGLLLLGSAIAAAFA, FISFIALPLATNSSEAVSAII, YGGVTMNNTLCLGVFLALIYI, FSSEVLIILLVCVIMGLFTSF, and LVAYMLYPLSLVVVYILDFVF.

Belongs to the Ca(2+):cation antiporter (CaCA) (TC 2.A.19) family.

It is found in the cell membrane. Its function is as follows. May function as a sodium/calcium exchanger (NCX) and participate in the maintenance of calcium homeostasis. May play a role abiotic stress responses. This Oryza sativa subsp. japonica (Rice) protein is Sodium/calcium exchanger NCL1.